A 37-amino-acid polypeptide reads, in one-letter code: Large ribosomal subunit protein bL36 (37 aa).

The protein belongs to the bacterial ribosomal protein bL36 family.

The sequence is that of Large ribosomal subunit protein bL36 (rpmJ) from Fusobacterium nucleatum subsp. nucleatum (strain ATCC 25586 / DSM 15643 / BCRC 10681 / CIP 101130 / JCM 8532 / KCTC 2640 / LMG 13131 / VPI 4355).